The following is an 864-amino-acid chain: DNA mismatch repair protein MutS (864 aa).

ATP is bound at residue 607–614 (GPNMGGKS).

This sequence belongs to the DNA mismatch repair MutS family.

In terms of biological role, this protein is involved in the repair of mismatches in DNA. It is possible that it carries out the mismatch recognition step. This protein has a weak ATPase activity. This is DNA mismatch repair protein MutS from Neisseria meningitidis serogroup C (strain 053442).